We begin with the raw amino-acid sequence, 205 residues long: Ribosomal RNA small subunit methyltransferase G (205 aa).

Residues Gly-73, Leu-78, 124–125 (VE), and Arg-138 contribute to the S-adenosyl-L-methionine site.

It belongs to the methyltransferase superfamily. RNA methyltransferase RsmG family.

The protein localises to the cytoplasm. It catalyses the reaction guanosine(527) in 16S rRNA + S-adenosyl-L-methionine = N(7)-methylguanosine(527) in 16S rRNA + S-adenosyl-L-homocysteine. Its function is as follows. Specifically methylates the N7 position of guanine in position 527 of 16S rRNA. The polypeptide is Ribosomal RNA small subunit methyltransferase G (Actinobacillus pleuropneumoniae serotype 7 (strain AP76)).